The chain runs to 128 residues: Large ribosomal subunit protein bL12 (128 aa).

This sequence belongs to the bacterial ribosomal protein bL12 family. In terms of assembly, homodimer. Part of the ribosomal stalk of the 50S ribosomal subunit. Forms a multimeric L10(L12)X complex, where L10 forms an elongated spine to which 2 to 4 L12 dimers bind in a sequential fashion. Binds GTP-bound translation factors.

Forms part of the ribosomal stalk which helps the ribosome interact with GTP-bound translation factors. Is thus essential for accurate translation. This chain is Large ribosomal subunit protein bL12, found in Kosmotoga olearia (strain ATCC BAA-1733 / DSM 21960 / TBF 19.5.1).